Here is a 29-residue protein sequence, read N- to C-terminus: Serum amyloid P-component (29 aa).

In terms of domain architecture, Pentraxin (PTX) spans 6-29; it reads LGKVFVFSKESNVDDVKLLTPQTE.

This sequence belongs to the pentraxin family. In terms of assembly, homopentamer. Pentraxin (or pentaxin) have a discoid arrangement of 5 non-covalently bound subunits. The cofactor is Ca(2+).

It localises to the secreted. The polypeptide is Serum amyloid P-component (Hippoglossus hippoglossus (Atlantic halibut)).